Consider the following 227-residue polypeptide: Cytochrome c oxidase subunit 2 (227 aa).

Residues 1-14 lie on the Mitochondrial intermembrane side of the membrane; it reads MAHSFQLGFQDATS. A helical transmembrane segment spans residues 15–45; that stretch reads PIMEELLHFHDHTLMIVFLISSLVLYIITLM. At 46 to 59 the chain is on the mitochondrial matrix side; sequence LTTKLTHTSTMDAQ. The helical transmembrane segment at 60-87 threads the bilayer; it reads EVETVWTILPAIILILIALPSLRILYLM. Topologically, residues 88-227 are mitochondrial intermembrane; the sequence is DEINTPSLTV…HFENWSTSMI (140 aa). Cu cation contacts are provided by histidine 161, cysteine 196, glutamate 198, cysteine 200, histidine 204, and methionine 207. Mg(2+) is bound at residue glutamate 198.

This sequence belongs to the cytochrome c oxidase subunit 2 family. As to quaternary structure, component of the cytochrome c oxidase (complex IV, CIV), a multisubunit enzyme composed of 14 subunits. The complex is composed of a catalytic core of 3 subunits MT-CO1, MT-CO2 and MT-CO3, encoded in the mitochondrial DNA, and 11 supernumerary subunits COX4I, COX5A, COX5B, COX6A, COX6B, COX6C, COX7A, COX7B, COX7C, COX8 and NDUFA4, which are encoded in the nuclear genome. The complex exists as a monomer or a dimer and forms supercomplexes (SCs) in the inner mitochondrial membrane with NADH-ubiquinone oxidoreductase (complex I, CI) and ubiquinol-cytochrome c oxidoreductase (cytochrome b-c1 complex, complex III, CIII), resulting in different assemblies (supercomplex SCI(1)III(2)IV(1) and megacomplex MCI(2)III(2)IV(2)). Found in a complex with TMEM177, COA6, COX18, COX20, SCO1 and SCO2. Interacts with TMEM177 in a COX20-dependent manner. Interacts with COX20. Interacts with COX16. The cofactor is Cu cation.

It is found in the mitochondrion inner membrane. It catalyses the reaction 4 Fe(II)-[cytochrome c] + O2 + 8 H(+)(in) = 4 Fe(III)-[cytochrome c] + 2 H2O + 4 H(+)(out). In terms of biological role, component of the cytochrome c oxidase, the last enzyme in the mitochondrial electron transport chain which drives oxidative phosphorylation. The respiratory chain contains 3 multisubunit complexes succinate dehydrogenase (complex II, CII), ubiquinol-cytochrome c oxidoreductase (cytochrome b-c1 complex, complex III, CIII) and cytochrome c oxidase (complex IV, CIV), that cooperate to transfer electrons derived from NADH and succinate to molecular oxygen, creating an electrochemical gradient over the inner membrane that drives transmembrane transport and the ATP synthase. Cytochrome c oxidase is the component of the respiratory chain that catalyzes the reduction of oxygen to water. Electrons originating from reduced cytochrome c in the intermembrane space (IMS) are transferred via the dinuclear copper A center (CU(A)) of subunit 2 and heme A of subunit 1 to the active site in subunit 1, a binuclear center (BNC) formed by heme A3 and copper B (CU(B)). The BNC reduces molecular oxygen to 2 water molecules using 4 electrons from cytochrome c in the IMS and 4 protons from the mitochondrial matrix. In Cephalopachus bancanus (Western tarsier), this protein is Cytochrome c oxidase subunit 2 (MT-CO2).